A 290-amino-acid polypeptide reads, in one-letter code: MRIADYSVTKAVLERHGFTFKKSFGQNFLTDTNILQKIVDTAEIDDQVNVIEIGPGIGALTEFLAERAAQVMAFEIDHRLVPILVDTLRDFDNVTVVNEDILKVDLAQHIQNFKNPNLPIKVVANLPYYITTPILMHLIESGIPFCEFVVMMQKEVADRISAQPNTKAYGSLSIAVQYYMTAKVAFIVPRTVFVPAPNVDSAILKMVRRPEPAVAVEDENFFFKVSKASFTHRRKTLWNNLTGYFGKTEEVKDKLTKALDQAGLSPSVRGEALSLAEFAGLADALKGQGL.

The S-adenosyl-L-methionine site is built by asparagine 27, leucine 29, glycine 54, glutamate 75, aspartate 100, and asparagine 125.

It belongs to the class I-like SAM-binding methyltransferase superfamily. rRNA adenine N(6)-methyltransferase family. RsmA subfamily.

The protein localises to the cytoplasm. It carries out the reaction adenosine(1518)/adenosine(1519) in 16S rRNA + 4 S-adenosyl-L-methionine = N(6)-dimethyladenosine(1518)/N(6)-dimethyladenosine(1519) in 16S rRNA + 4 S-adenosyl-L-homocysteine + 4 H(+). In terms of biological role, specifically dimethylates two adjacent adenosines (A1518 and A1519) in the loop of a conserved hairpin near the 3'-end of 16S rRNA in the 30S particle. May play a critical role in biogenesis of 30S subunits. The polypeptide is Ribosomal RNA small subunit methyltransferase A (Streptococcus pneumoniae (strain Hungary19A-6)).